Here is a 332-residue protein sequence, read N- to C-terminus: Casein kinase II subunit alpha (332 aa).

The Protein kinase domain maps to 43–327 (YEIIRKVGRG…TCQEAMAHPY (285 aa)). Residues 49 to 57 (VGRGKYSEV) and lysine 72 contribute to the ATP site. Aspartate 160 functions as the Proton acceptor in the catalytic mechanism.

This sequence belongs to the protein kinase superfamily. Ser/Thr protein kinase family. CK2 subfamily. In terms of assembly, tetramer composed of two alpha chains, one beta chain and one beta' chain.

It carries out the reaction L-seryl-[protein] + ATP = O-phospho-L-seryl-[protein] + ADP + H(+). The enzyme catalyses L-threonyl-[protein] + ATP = O-phospho-L-threonyl-[protein] + ADP + H(+). Its function is as follows. Catalytic subunit of a constitutively active serine/threonine-protein kinase complex that phosphorylates a large number of substrates containing acidic residues C-terminal to the phosphorylated serine or threonine. The sequence is that of Casein kinase II subunit alpha from Schizosaccharomyces pombe (strain 972 / ATCC 24843) (Fission yeast).